The following is a 623-amino-acid chain: Indolepyruvate oxidoreductase subunit IorA (623 aa).

The [4Fe-4S] cluster site is built by C573, C576, C579, C585, C602, C605, C608, and C612. The region spanning 593–622 is the 4Fe-4S ferredoxin-type domain; sequence EKVSIDQSLCVGCAVCAKICPNRAIKPAKS.

As to quaternary structure, heterodimer of the IorA and IorB subunits. Requires [4Fe-4S] cluster as cofactor.

It catalyses the reaction indole-3-pyruvate + 2 oxidized [2Fe-2S]-[ferredoxin] + CoA = (indol-3-yl)acetyl-CoA + 2 reduced [2Fe-2S]-[ferredoxin] + CO2 + H(+). In terms of biological role, catalyzes the ferredoxin-dependent oxidative decarboxylation of arylpyruvates. The chain is Indolepyruvate oxidoreductase subunit IorA (iorA) from Archaeoglobus fulgidus (strain ATCC 49558 / DSM 4304 / JCM 9628 / NBRC 100126 / VC-16).